We begin with the raw amino-acid sequence, 240 residues long: EF-hand domain-containing protein D2 (240 aa).

The interval 1–51 is disordered; it reads MATDELASKLSRRLQMEGEGGEATEQPGLNGAAAAAAAEAPDETAQALGSA. Alanine 2 is subject to N-acetylalanine. The residue at position 11 (serine 11) is a Phosphoserine. Positions 32 to 47 are enriched in low complexity; that stretch reads AAAAAAAEAPDETAQA. 2 positions are modified to phosphoserine: serine 74 and serine 76. A Phosphotyrosine modification is found at tyrosine 83. 2 EF-hand domains span residues 92-127 and 128-163; these read KQIKDMEKMFKQYDAGRDGFIDLMELKLMMEKLGAP and QTHLGLKSMIQEVDEDFDSKLSFREFLLIFRKAAAG. Residues aspartate 105, aspartate 109, glutamate 116, aspartate 141, aspartate 143, aspartate 145, lysine 147, and glutamate 152 each contribute to the Ca(2+) site. The residue at position 233 (lysine 233) is an N6-acetyllysine.

In terms of assembly, interacts with CASP9; with inactive form. Detected in thymus, kidney, spleen, lung, liver and brain. Highest abundance in brain and lowest in kidney and thymus.

The protein resides in the membrane raft. Its function is as follows. May regulate B-cell receptor (BCR)-induced immature and primary B-cell apoptosis. Plays a role as negative regulator of the canonical NF-kappa-B-activating branch. Controls spontaneous apoptosis through the regulation of BCL2L1 abundance. This chain is EF-hand domain-containing protein D2 (Efhd2), found in Mus musculus (Mouse).